The chain runs to 453 residues: Mogroside IIIx synthase (453 aa).

Residue His21 is the Proton acceptor of the active site. Catalysis depends on Asp122, which acts as the Charge relay. UDP-alpha-D-glucose is bound by residues Ser273, Gln336, Trp354, Asn355, Ser356, Glu359, Asp375, and Gln376.

The protein belongs to the UDP-glycosyltransferase family. As to expression, highly expressed in mature fruits.

It carries out the reaction mogroside IIE + UDP-alpha-D-glucose = mogroside IIIX + UDP + H(+). The enzyme catalyses mogroside III + UDP-alpha-D-glucose = mogroside IV + UDP + H(+). The catalysed reaction is mogroside III + UDP-alpha-D-glucose = siamenoside I + UDP + H(+). It catalyses the reaction mogroside IV + UDP-alpha-D-glucose = mogroside V + UDP + H(+). It participates in secondary metabolite biosynthesis; terpenoid biosynthesis. UDP-glycosyltransferase involved in the biosynthesis of cucurbitacin and mogroside tetracyclic triterpene natural products (e.g. siamenoside I and mogrosides IV, V and VI). Cucurbitacins have cytotoxic properties and exhibit deterrent taste as a defense barrier against herbivores. Mogrosides are nonsugar highly oxygenated compounds used as high-intensity zero-calorie sweeteners; they also possess pharmacological properties such as regulating immunity, lowering blood sugar and lipid levels, protecting the liver, and acting as antioxidants and antitumor agents. Catalyzes the branched glucosylations of mogroside II-E, mogroside III and mogroside IV. In Siraitia grosvenorii (Monk's fruit), this protein is Mogroside IIIx synthase.